Consider the following 181-residue polypeptide: MLLVGRIGKSVGLNGGLKLHLESDFPECLKKGVKVSVAPINAFSRASSFKDYVIHSYEHAKNLLFLETIHTPEKAKELTNLGLFMSEAESKKLCVLKEGEFFYCDLVGLSVVEENEFLGKVIEIQRISQIDYFLVETTKSLVEKGLAKIFLIPYRDFYIQEILLQDKKITTHNAKTLLENS.

Residues 98-177 (EGEFFYCDLV…KITTHNAKTL (80 aa)) form the PRC barrel domain.

This sequence belongs to the RimM family. Binds ribosomal protein uS19.

Its subcellular location is the cytoplasm. An accessory protein needed during the final step in the assembly of 30S ribosomal subunit, possibly for assembly of the head region. Essential for efficient processing of 16S rRNA. May be needed both before and after RbfA during the maturation of 16S rRNA. It has affinity for free ribosomal 30S subunits but not for 70S ribosomes. In Helicobacter pylori (strain HPAG1), this protein is Ribosome maturation factor RimM.